We begin with the raw amino-acid sequence, 1354 residues long: RNA-directed RNA polymerase VP1 (1354 aa).

It catalyses the reaction RNA(n) + a ribonucleoside 5'-triphosphate = RNA(n+1) + diphosphate. Its function is as follows. RNA-directed RNA polymerase that is involved in transcription and genome replication. Following infection, it catalyzes the synthesis of fully conservative plus strands. After core assembly, which consists in recruitment of one capped plus-strand for each genomic segments and polymerase complexes, the polymerase switches mode and catalyzes the synthesis of complementary minus-strands. This Cryphonectria parasitica mycoreovirus 1 (strain 9B21) (CpMYRV-1) protein is RNA-directed RNA polymerase VP1.